The sequence spans 173 residues: Co-chaperone protein HscB homolog (173 aa).

In terms of domain architecture, J spans 3–75 (NPFALFDLPI…ILRADCIIAL (73 aa)).

The protein belongs to the HscB family. In terms of assembly, interacts with HscA and stimulates its ATPase activity.

In terms of biological role, co-chaperone involved in the maturation of iron-sulfur cluster-containing proteins. Seems to help targeting proteins to be folded toward HscA. This chain is Co-chaperone protein HscB homolog, found in Mannheimia succiniciproducens (strain KCTC 0769BP / MBEL55E).